A 95-amino-acid polypeptide reads, in one-letter code: Acylphosphatase (95 aa).

Residues 10–95 (CIHATVSGKV…VEDYSDFRVR (86 aa)) enclose the Acylphosphatase-like domain. Active-site residues include Arg25 and Asn43.

The protein belongs to the acylphosphatase family.

The catalysed reaction is an acyl phosphate + H2O = a carboxylate + phosphate + H(+). In Coxiella burnetii (strain Dugway 5J108-111), this protein is Acylphosphatase (acyP).